We begin with the raw amino-acid sequence, 266 residues long: MPEVTLTTLNGLKAKGEKITMLTCYDATFAKAASEAGVEVLLVGDSLGMVLQGHDSTLPVSNDDMAYHTASVKRGNNGALILTDLPFMAHATPELAFTNAAQLMRAGAHMVKIEGAAWLAETIRLLAERGVPVCAHMGLTPQTVNVLGGYKVQGRQEAQARQMRADAIALEQAGAAMLLLECVPSELAAEITQAVGIPVIGIGAGSATDGQVLVLHDMLGLSLSGRVPKFVKNFMAGQPDIQSALAAYVEAVKTVSFPASEHGFSA.

Mg(2+) is bound by residues Asp45 and Asp84. 3-methyl-2-oxobutanoate-binding positions include 45–46, Asp84, and Lys112; that span reads DS. Mg(2+) is bound at residue Glu114. Glu181 functions as the Proton acceptor in the catalytic mechanism.

Belongs to the PanB family. As to quaternary structure, homodecamer; pentamer of dimers. Mg(2+) serves as cofactor.

The protein localises to the cytoplasm. It catalyses the reaction 3-methyl-2-oxobutanoate + (6R)-5,10-methylene-5,6,7,8-tetrahydrofolate + H2O = 2-dehydropantoate + (6S)-5,6,7,8-tetrahydrofolate. It functions in the pathway cofactor biosynthesis; (R)-pantothenate biosynthesis; (R)-pantoate from 3-methyl-2-oxobutanoate: step 1/2. Functionally, catalyzes the reversible reaction in which hydroxymethyl group from 5,10-methylenetetrahydrofolate is transferred onto alpha-ketoisovalerate to form ketopantoate. This Pseudomonas entomophila (strain L48) protein is 3-methyl-2-oxobutanoate hydroxymethyltransferase 2.